The following is a 136-amino-acid chain: MLTAAQRLRRSTDFAAAVRGGRRVGRGVVVVHLTLPGTLPDVSSSKPARDTGAEQTSAPARAGFVVSKAVGNAVVRNAVRRRLRHLVRERLPGLPAGSTLVVRALPTAAHRSYQRLGVDLDAAIAAARAPRGRRSR.

A disordered region spans residues 39 to 59 (LPDVSSSKPARDTGAEQTSAP).

The protein belongs to the RnpA family. Consists of a catalytic RNA component (M1 or rnpB) and a protein subunit.

The catalysed reaction is Endonucleolytic cleavage of RNA, removing 5'-extranucleotides from tRNA precursor.. Functionally, RNaseP catalyzes the removal of the 5'-leader sequence from pre-tRNA to produce the mature 5'-terminus. It can also cleave other RNA substrates such as 4.5S RNA. The protein component plays an auxiliary but essential role in vivo by binding to the 5'-leader sequence and broadening the substrate specificity of the ribozyme. This Salinispora tropica (strain ATCC BAA-916 / DSM 44818 / JCM 13857 / NBRC 105044 / CNB-440) protein is Ribonuclease P protein component.